Here is a 180-residue protein sequence, read N- to C-terminus: Translation initiation factor IF-3 (180 aa).

The protein belongs to the IF-3 family. Monomer.

The protein resides in the cytoplasm. In terms of biological role, IF-3 binds to the 30S ribosomal subunit and shifts the equilibrium between 70S ribosomes and their 50S and 30S subunits in favor of the free subunits, thus enhancing the availability of 30S subunits on which protein synthesis initiation begins. The protein is Translation initiation factor IF-3 of Xylella fastidiosa (strain 9a5c).